Here is a 157-residue protein sequence, read N- to C-terminus: Crossover junction endodeoxyribonuclease RuvC (157 aa).

Active-site residues include aspartate 7, glutamate 66, and aspartate 139. 3 residues coordinate Mg(2+): aspartate 7, glutamate 66, and aspartate 139.

This sequence belongs to the RuvC family. In terms of assembly, homodimer which binds Holliday junction (HJ) DNA. The HJ becomes 2-fold symmetrical on binding to RuvC with unstacked arms; it has a different conformation from HJ DNA in complex with RuvA. In the full resolvosome a probable DNA-RuvA(4)-RuvB(12)-RuvC(2) complex forms which resolves the HJ. It depends on Mg(2+) as a cofactor.

It localises to the cytoplasm. The catalysed reaction is Endonucleolytic cleavage at a junction such as a reciprocal single-stranded crossover between two homologous DNA duplexes (Holliday junction).. The RuvA-RuvB-RuvC complex processes Holliday junction (HJ) DNA during genetic recombination and DNA repair. Endonuclease that resolves HJ intermediates. Cleaves cruciform DNA by making single-stranded nicks across the HJ at symmetrical positions within the homologous arms, yielding a 5'-phosphate and a 3'-hydroxyl group; requires a central core of homology in the junction. The consensus cleavage sequence is 5'-(A/T)TT(C/G)-3'. Cleavage occurs on the 3'-side of the TT dinucleotide at the point of strand exchange. HJ branch migration catalyzed by RuvA-RuvB allows RuvC to scan DNA until it finds its consensus sequence, where it cleaves and resolves the cruciform DNA. This chain is Crossover junction endodeoxyribonuclease RuvC, found in Helicobacter pylori (strain P12).